The chain runs to 62 residues: UPF0291 protein CLJ_B2839 (62 aa).

This sequence belongs to the UPF0291 family.

Its subcellular location is the cytoplasm. The chain is UPF0291 protein CLJ_B2839 from Clostridium botulinum (strain 657 / Type Ba4).